Consider the following 245-residue polypeptide: 1-(5-phosphoribosyl)-5-[(5-phosphoribosylamino)methylideneamino] imidazole-4-carboxamide isomerase (245 aa).

Residue D8 is the Proton acceptor of the active site. D129 acts as the Proton donor in catalysis.

This sequence belongs to the HisA/HisF family.

The protein resides in the cytoplasm. The catalysed reaction is 1-(5-phospho-beta-D-ribosyl)-5-[(5-phospho-beta-D-ribosylamino)methylideneamino]imidazole-4-carboxamide = 5-[(5-phospho-1-deoxy-D-ribulos-1-ylimino)methylamino]-1-(5-phospho-beta-D-ribosyl)imidazole-4-carboxamide. Its pathway is amino-acid biosynthesis; L-histidine biosynthesis; L-histidine from 5-phospho-alpha-D-ribose 1-diphosphate: step 4/9. This Rhodopseudomonas palustris (strain BisA53) protein is 1-(5-phosphoribosyl)-5-[(5-phosphoribosylamino)methylideneamino] imidazole-4-carboxamide isomerase.